The chain runs to 296 residues: D-alanine--D-alanine ligase (296 aa).

The ATP-grasp domain occupies 103 to 293 (KEILMHYRMP…FDSFVKRIIE (191 aa)). 129–180 (ISFPVAVKPSSGGSSIATFKVKSIQELKHAYEEASKYGEVMIEQWVTGKEIT) lines the ATP pocket. The Mg(2+) site is built by Asp-247, Glu-260, and Asn-262.

It belongs to the D-alanine--D-alanine ligase family. It depends on Mg(2+) as a cofactor. Mn(2+) is required as a cofactor.

It localises to the cytoplasm. The enzyme catalyses 2 D-alanine + ATP = D-alanyl-D-alanine + ADP + phosphate + H(+). It functions in the pathway cell wall biogenesis; peptidoglycan biosynthesis. Its function is as follows. Cell wall formation. This Francisella tularensis subsp. tularensis (strain WY96-3418) protein is D-alanine--D-alanine ligase.